The primary structure comprises 424 residues: Serpin-Z2A (424 aa).

The segment at 370-394 (GTEAAASTACTIRLLSMSYPEDFVA) is RCL.

The protein belongs to the serpin family.

Functionally, probable serine protease inhibitor. The sequence is that of Serpin-Z2A from Oryza sativa subsp. japonica (Rice).